Reading from the N-terminus, the 246-residue chain is uncharacterized protein (246 aa).

Residues 120-149 (EKCAGETSPYTSASVSNSKKATSSSNFTKS) are disordered. The segment covering 130–149 (TSASVSNSKKATSSSNFTKS) has biased composition (low complexity).

This is an uncharacterized protein from Caenorhabditis elegans.